The sequence spans 365 residues: tRNA N6-adenosine threonylcarbamoyltransferase (365 aa).

2 residues coordinate Fe cation: H119 and H123. Residues 141–145 (LVSGG), D174, and G187 contribute to the substrate site. Residues 184 to 203 (QPGGPSVEGEARQGDPKRFR) are disordered. Residues 192–201 (GEARQGDPKR) are compositionally biased toward basic and acidic residues. N289 provides a ligand contact to substrate. D317 is a binding site for Fe cation. Residues 342–365 (ARPRWPLDQSSPAMLGSGKKGAKA) are disordered.

It belongs to the KAE1 / TsaD family. Requires Fe(2+) as cofactor.

Its subcellular location is the cytoplasm. The enzyme catalyses L-threonylcarbamoyladenylate + adenosine(37) in tRNA = N(6)-L-threonylcarbamoyladenosine(37) in tRNA + AMP + H(+). Its function is as follows. Required for the formation of a threonylcarbamoyl group on adenosine at position 37 (t(6)A37) in tRNAs that read codons beginning with adenine. Is involved in the transfer of the threonylcarbamoyl moiety of threonylcarbamoyl-AMP (TC-AMP) to the N6 group of A37, together with TsaE and TsaB. TsaD likely plays a direct catalytic role in this reaction. The protein is tRNA N6-adenosine threonylcarbamoyltransferase of Ruegeria pomeroyi (strain ATCC 700808 / DSM 15171 / DSS-3) (Silicibacter pomeroyi).